Here is a 697-residue protein sequence, read N- to C-terminus: Pentatricopeptide repeat-containing protein At2g13600 (697 aa).

PPR repeat units lie at residues aspartate 18–asparagine 53, glutamate 54–arginine 84, asparagine 85–arginine 115, aspartate 116–leucine 150, asparagine 151–serine 185, aspartate 186–arginine 216, asparagine 217–proline 251, aspartate 252–asparagine 282, aspartate 288–alanine 322, threonine 324–arginine 349, asparagine 350–proline 384, threonine 385–phenylalanine 419, aspartate 426–arginine 456, aspartate 457–proline 491, aspartate 492–proline 527, and leucine 528–glutamine 558. A type E motif region spans residues isoleucine 563–glutamine 638. The segment at glycine 639 to arginine 669 is type E(+) motif.

It belongs to the PPR family. PCMP-E subfamily.

The sequence is that of Pentatricopeptide repeat-containing protein At2g13600 (PCMP-E76) from Arabidopsis thaliana (Mouse-ear cress).